A 219-amino-acid chain; its full sequence is Uracil-DNA glycosylase (219 aa).

Asp-59 functions as the Proton acceptor in the catalytic mechanism.

This sequence belongs to the uracil-DNA glycosylase (UDG) superfamily. UNG family.

Its subcellular location is the cytoplasm. It catalyses the reaction Hydrolyzes single-stranded DNA or mismatched double-stranded DNA and polynucleotides, releasing free uracil.. Functionally, excises uracil residues from the DNA which can arise as a result of misincorporation of dUMP residues by DNA polymerase or due to deamination of cytosine. The chain is Uracil-DNA glycosylase from Macrococcus caseolyticus (strain JCSC5402) (Macrococcoides caseolyticum).